Here is a 201-residue protein sequence, read N- to C-terminus: 3-isopropylmalate dehydratase small subunit (201 aa).

The protein belongs to the LeuD family. LeuD type 1 subfamily. In terms of assembly, heterodimer of LeuC and LeuD.

It catalyses the reaction (2R,3S)-3-isopropylmalate = (2S)-2-isopropylmalate. Its pathway is amino-acid biosynthesis; L-leucine biosynthesis; L-leucine from 3-methyl-2-oxobutanoate: step 2/4. Catalyzes the isomerization between 2-isopropylmalate and 3-isopropylmalate, via the formation of 2-isopropylmaleate. This is 3-isopropylmalate dehydratase small subunit from Buchnera aphidicola subsp. Baizongia pistaciae (strain Bp).